We begin with the raw amino-acid sequence, 86 residues long: Photosystem I reaction center subunit PsaK (86 aa).

Helical transmembrane passes span Leu-14–Phe-34 and Phe-57–Val-77.

It belongs to the PsaG/PsaK family.

The protein resides in the cellular thylakoid membrane. This is Photosystem I reaction center subunit PsaK from Nostoc punctiforme (strain ATCC 29133 / PCC 73102).